The chain runs to 610 residues: DNA mismatch repair protein MutL (610 aa).

This sequence belongs to the DNA mismatch repair MutL/HexB family.

Functionally, this protein is involved in the repair of mismatches in DNA. It is required for dam-dependent methyl-directed DNA mismatch repair. May act as a 'molecular matchmaker', a protein that promotes the formation of a stable complex between two or more DNA-binding proteins in an ATP-dependent manner without itself being part of a final effector complex. This is DNA mismatch repair protein MutL from Rickettsia africae (strain ESF-5).